The sequence spans 424 residues: MKIIVFGITHKKATIDLREKVAFSQSKKQEAYSLLKESPFIHEAVILSTCNRSEVFAVVQDTSIARRWFKRFYTDFFQLKETALEGCNHFEKGREAVQYLYHVCVGVDSLVIGEDQILGQVKEAHAEALDFAATGKILNKLFLEAVTTAKEVKTETAISENALSISSIAVKQMENHLKGLVGKTVLVVGFGKMSRIAIENLLCKGIKRLYICNRTKESVQELIEKHPQIHYLSYDQKYEMLNGVDAVISATGAPHFIFYKEDMEKIYQKHRPMCMIDIALPRDIDPAVKEIEGIELFHIDDLKEIANENLAYRMDCIEIIKQSINEAIEKYEGWYQCLPIYPRIQAIKAYSETLTDQELEKLFKRLDHMAEEDRQVIEVVVKSLVKKMWKTPILQLKDAGIRGNGEAFAAFVDEFLGLDAGCGK.

Residues 49–52 (TCNR), Ser109, 114–116 (EDQ), and Gln120 contribute to the substrate site. Cys50 serves as the catalytic Nucleophile. An NADP(+)-binding site is contributed by 189 to 194 (GFGKMS).

The protein belongs to the glutamyl-tRNA reductase family. In terms of assembly, homodimer.

The catalysed reaction is (S)-4-amino-5-oxopentanoate + tRNA(Glu) + NADP(+) = L-glutamyl-tRNA(Glu) + NADPH + H(+). The protein operates within porphyrin-containing compound metabolism; protoporphyrin-IX biosynthesis; 5-aminolevulinate from L-glutamyl-tRNA(Glu): step 1/2. Its function is as follows. Catalyzes the NADPH-dependent reduction of glutamyl-tRNA(Glu) to glutamate 1-semialdehyde (GSA). This chain is Glutamyl-tRNA reductase, found in Alkaliphilus metalliredigens (strain QYMF).